We begin with the raw amino-acid sequence, 365 residues long: Serine/threonine-protein kinase SAPK6 (365 aa).

In terms of domain architecture, Protein kinase spans 4–260 (YELLKDIGSG…IREIRNHPWF (257 aa)). ATP contacts are provided by residues 10–18 (IGSGNFGVA) and lysine 33. The active-site Proton acceptor is aspartate 123. A disordered region spans residues 298 to 365 (VQEAKTPPPS…AHASCDLQKS (68 aa)). Residues 317 to 347 (TEEEEQEDGKNPDDDEGDRDEEEGEEGDSED) show a composition bias toward acidic residues.

The protein belongs to the protein kinase superfamily. Ser/Thr protein kinase family. Interacts with BZIP46. Post-translationally, may be phosphorylated. Expressed in leaf blades and leaf sheaths. Expressed in shoots and roots of young seedlings.

It catalyses the reaction L-seryl-[protein] + ATP = O-phospho-L-seryl-[protein] + ADP + H(+). The catalysed reaction is L-threonyl-[protein] + ATP = O-phospho-L-threonyl-[protein] + ADP + H(+). With respect to regulation, activated by hyperosmotic stress. Its function is as follows. May play a role in signal transduction of hyperosmotic response. Can phosphorylate ABI5 in vitro. Can phosphorylate BZIP46 in vitro. This Oryza sativa subsp. japonica (Rice) protein is Serine/threonine-protein kinase SAPK6.